Reading from the N-terminus, the 874-residue chain is Pentatricopeptide repeat-containing protein At2g17140 (874 aa).

19 PPR repeats span residues 111 to 145, 146 to 180, 181 to 215, 216 to 250, 251 to 285, 290 to 320, 325 to 359, 360 to 394, 395 to 429, 430 to 464, 465 to 499, 523 to 557, 558 to 592, 593 to 627, 628 to 662, 663 to 693, 697 to 731, 732 to 766, and 767 to 797; these read SVYLYNLLLESCIKERRVEFVSWLYKDMVLCGIAP, QTYTFNLLIRALCDSSCVDAARELFDEMPEKGCKP, NEFTFGILVRGYCKAGLTDKGLELLNAMESFGVLP, NKVIYNTIVSSFCREGRNDDSEKMVEKMREEGLVP, DIVTFNSRISALCKEGKVLDASRIFSDMELDEYLG, NSITYNLMLKGFCKVGLLEDAKTLFESIREN, SLQSYNIWLQGLVRHGKFIEAETVLKQMTDKGIGP, SIYSYNILMDGLCKLGMLSDAKTIVGLMKRNGVCP, DAVTYGCLLHGYCSVGKVDAAKSLLQEMMRNNCLP, NAYTCNILLHSLWKMGRISEAEELLRKMNEKGYGL, DTVTCNIIVDGLCGSGELDKAIEIVKGMRVHGSAA, DLITYSTLLNGLCKAGRFAEAKNLFAEMMGEKLQP, DSVAYNIFIHHFCKQGKISSAFRVLKDMEKKGCHK, SLETYNSLILGLGIKNQIFEIHGLMDEMKEKGISP, NICTYNTAIQYLCEGEKVEDATNLLDEMMQKNIAP, NVFSFKYLIEAFCKVPDFDMAQEVFETAVSI, KEGLYSLMFNELLAAGQLLKATELLEAVLDRGFEL, GTFLYKDLVESLCKKDELEVASGILHKMIDRGYGF, and DPAALMPVIDGLGKMGNKKEANSFADKMMEM.

This sequence belongs to the PPR family. P subfamily.

In Arabidopsis thaliana (Mouse-ear cress), this protein is Pentatricopeptide repeat-containing protein At2g17140.